Consider the following 140-residue polypeptide: Large ribosomal subunit protein uL16 (140 aa).

This sequence belongs to the universal ribosomal protein uL16 family. In terms of assembly, part of the 50S ribosomal subunit.

Functionally, binds 23S rRNA and is also seen to make contacts with the A and possibly P site tRNAs. This Onion yellows phytoplasma (strain OY-M) protein is Large ribosomal subunit protein uL16.